A 279-amino-acid chain; its full sequence is MSPARRCRGMRAAVAASVGLSEGPAGSRSGRLFRPPSPAPAAPGARLLRLPGSGAVQAASPERAGWTEALRAAVAELRAGAVVAVPTDTLYGLACAASCSAALRAVYRLKGRSEAKPLAVCLGRVADVYRYCRVRVPEGLLKDLLPGPVTLVMERSEELNKDLNPFTPLVGIRIPDHAFMQDLAQMFEGPLALTSANLSSQASSLNVEEFQDLWPQLSLVIDGGQIGDGQSPECRLGSTVVDLSVPGKFGIIRPGCALESTTAILQQKYGLLPSHASYL.

Residues 1-55 (MSPARRCRGMRAAVAASVGLSEGPAGSRSGRLFRPPSPAPAAPGARLLRLPGSGA) constitute a mitochondrion transit peptide. The tract at residues 21 to 41 (SEGPAGSRSGRLFRPPSPAPA) is disordered. Ser-60 carries the post-translational modification Phosphoserine. A YrdC-like domain is found at 67–257 (TEALRAAVAE…KFGIIRPGCA (191 aa)).

This sequence belongs to the SUA5 family. In terms of assembly, interacts with RSC1A1. As to expression, ubiquitously expressed.

The protein resides in the cytoplasm. It is found in the mitochondrion. Its subcellular location is the cell membrane. The catalysed reaction is L-threonine + hydrogencarbonate + ATP = L-threonylcarbamoyladenylate + diphosphate + H2O. In terms of biological role, cytoplasmic and mitochondrial threonylcarbamoyl-AMP synthase required for the formation of a threonylcarbamoyl group on adenosine at position 37 (t(6)A37) in tRNAs that read codons beginning with adenine. Catalyzes the conversion of L-threonine, HCO(3)(-)/CO(2) and ATP to give threonylcarbamoyl-AMP (TC-AMP) as the acyladenylate intermediate, with the release of diphosphate. Participates in t(6)A37 formation in cytoplasmic and mitochondrial tRNAs. May regulate the activity of some transporters. The polypeptide is Threonylcarbamoyl-AMP synthase (Homo sapiens (Human)).